The following is a 314-amino-acid chain: MKLLEIKIESSYDVEDALAYFATEDLKALGTEARRRSDFEQAGWLHDSTVVDMDDIPNLPDELEFIAYFDEETDPEEMVKCFKDKLAELAGYGLKTAPGEISVDYVADQDWNTVWKKYYHVINLSRHLAIVPEWEDYQPAFKDQEIIRLDPGLAFGTGNHQTTQLAMLGIERAMVKPLTVADVGTGSGILAIAAHKLGAKSVLATDISDESMTAAEENAALNGIHDIALQKTSLLADVDGKFDLIVANILAEILLDLIPQLDSHLNEDGQVIFSGIDYLQLPKIEQALAENSFQIDLKMRAGRWIGLAISRKHD.

S-adenosyl-L-methionine is bound by residues Thr163, Gly184, Asp206, and Asn248.

The protein belongs to the methyltransferase superfamily. PrmA family.

The protein localises to the cytoplasm. It carries out the reaction L-lysyl-[protein] + 3 S-adenosyl-L-methionine = N(6),N(6),N(6)-trimethyl-L-lysyl-[protein] + 3 S-adenosyl-L-homocysteine + 3 H(+). Its function is as follows. Methylates ribosomal protein L11. This Lactobacillus delbrueckii subsp. bulgaricus (strain ATCC 11842 / DSM 20081 / BCRC 10696 / JCM 1002 / NBRC 13953 / NCIMB 11778 / NCTC 12712 / WDCM 00102 / Lb 14) protein is Ribosomal protein L11 methyltransferase.